A 522-amino-acid chain; its full sequence is Poly(A) polymerase (522 aa).

Residues 63 to 65, 76 to 78, aspartate 130, lysine 193, tyrosine 202, and 211 to 212 contribute to the ATP site; these read YGS, DID, and GI. Aspartate 76, aspartate 78, and aspartate 130 together coordinate Mg(2+). A disordered region spans residues 475-522; sequence QLKAKEENSIPNEEKKEQLKKEMKQEANTIVKNSSTDDDFMKRFTRKN. Over residues 476 to 499 the composition is skewed to basic and acidic residues; that stretch reads LKAKEENSIPNEEKKEQLKKEMKQ.

It belongs to the poly(A) polymerase family. Requires Mg(2+) as cofactor. The cofactor is Mn(2+).

The protein resides in the cytoplasm. Its subcellular location is the nucleus. It catalyses the reaction RNA(n) + ATP = RNA(n)-3'-adenine ribonucleotide + diphosphate. In terms of biological role, polymerase that creates the 3'-poly(A) tail of mRNA's. May acquire specificity through interaction with a cleavage and polyadenylation factor. This Entamoeba histolytica (strain ATCC 30459 / HM-1:IMSS / ABRM) protein is Poly(A) polymerase.